The primary structure comprises 262 residues: MRELRSSSFWRAILAEFLGSLLYTLLGLGASLRWAPGPHGVLGSALAFGLAQATLVQALGHVSGGHINPAITLAFLLASQLSLPRALGYLLAQLLGALAGAGVLYGVTPAAVRGTLGLSALHPSVGPGQGTVVELLLTAQFILCVFASFDDRHDGRPGSAALPVGFSLALGHLFGIPFTGAGMNPARSFAPAVITRNFTNHWVFWAGPLLGAALAALLYELALCPRARSMAERLAVLRGEPPAAAPPPEPPAEPLELKTQGL.

At 1 to 9 the chain is on the cytoplasmic side; that stretch reads MRELRSSSF. Residues 10–29 form a helical membrane-spanning segment; it reads WRAILAEFLGSLLYTLLGLG. The Extracellular segment spans residues 30–41; that stretch reads ASLRWAPGPHGV. A helical membrane pass occupies residues 42 to 59; the sequence is LGSALAFGLAQATLVQAL. The Cytoplasmic segment spans residues 60-61; sequence GH. Residues 62–77 constitute an intramembrane region (discontinuously helical); that stretch reads VSGGHINPAITLAFLL. Residues 68 to 70 carry the NPA 1 motif; that stretch reads NPA. The Cytoplasmic segment spans residues 78–82; sequence ASQLS. A helical membrane pass occupies residues 83–106; that stretch reads LPRALGYLLAQLLGALAGAGVLYG. At 107-127 the chain is on the extracellular side; it reads VTPAAVRGTLGLSALHPSVGP. The helical transmembrane segment at 128–148 threads the bilayer; it reads GQGTVVELLLTAQFILCVFAS. At 149–156 the chain is on the cytoplasmic side; that stretch reads FDDRHDGR. A helical transmembrane segment spans residues 157 to 175; it reads PGSAALPVGFSLALGHLFG. Over 176 to 178 the chain is Extracellular; that stretch reads IPF. The segment at residues 179 to 193 is an intramembrane region (discontinuously helical); that stretch reads TGAGMNPARSFAPAV. The NPA 2 signature appears at 184–186; the sequence is NPA. The Extracellular portion of the chain corresponds to 194–200; that stretch reads ITRNFTN. The chain crosses the membrane as a helical span at residues 201–222; sequence HWVFWAGPLLGAALAALLYELA. The Cytoplasmic segment spans residues 223 to 262; it reads LCPRARSMAERLAVLRGEPPAAAPPPEPPAEPLELKTQGL. Residues 227 to 237 form an interaction with CALM region; sequence ARSMAERLAVL. The segment at 240–262 is disordered; it reads EPPAAAPPPEPPAEPLELKTQGL. Positions 243–253 are enriched in pro residues; sequence AAAPPPEPPAE.

The protein belongs to the MIP/aquaporin (TC 1.A.8) family. As to quaternary structure, homotetramer; each monomer provides an independent water pore. Two homotetramers on opposing membranes can dimerize, forming a cell-cell junction. Interacts with CALM; the calcium-calmodulin/CALM complex interacts with the cytoplasmic domains of two aquaporins, leading to channel closure. During early stages of lens development, interacts through its C-terminal region with Cx56 and GJA8/Cx45.6. Major component of lens fiber gap junctions.

The protein resides in the cell membrane. It localises to the cell junction. It carries out the reaction H2O(in) = H2O(out). With respect to regulation, the water channel activity is inhibited by calcium through calmodulin/CALM. In terms of biological role, aquaporins form homotetrameric transmembrane channels, with each monomer independently mediating water transport across the plasma membrane along its osmotic gradient. Specifically expressed in lens fiber cells, this aquaporin is crucial for maintaining lens water homeostasis and transparency. Beyond water permeability, it also acts as a cell-to-cell adhesion molecule, forming thin junctions between lens fiber cells that are essential for maintaining the ordered structure and transparency of the lens. The protein is Lens fiber major intrinsic protein of Gallus gallus (Chicken).